A 210-amino-acid chain; its full sequence is Pyridoxine/pyridoxamine 5'-phosphate oxidase (210 aa).

Substrate-binding positions include 7-10 and Lys65; that span reads REDY. FMN is bound by residues 60–65, 75–76, Arg81, Lys82, and Gln104; these read RMVLLK and FT. Substrate is bound by residues Tyr122, Arg126, and Ser130. FMN contacts are provided by residues 139–140 and Trp183; that span reads QS. A substrate-binding site is contributed by 189–191; sequence RLH. An FMN-binding site is contributed by Arg193.

This sequence belongs to the pyridoxamine 5'-phosphate oxidase family. Homodimer. The cofactor is FMN.

It carries out the reaction pyridoxamine 5'-phosphate + O2 + H2O = pyridoxal 5'-phosphate + H2O2 + NH4(+). The catalysed reaction is pyridoxine 5'-phosphate + O2 = pyridoxal 5'-phosphate + H2O2. Its pathway is cofactor metabolism; pyridoxal 5'-phosphate salvage; pyridoxal 5'-phosphate from pyridoxamine 5'-phosphate: step 1/1. It functions in the pathway cofactor metabolism; pyridoxal 5'-phosphate salvage; pyridoxal 5'-phosphate from pyridoxine 5'-phosphate: step 1/1. Catalyzes the oxidation of either pyridoxine 5'-phosphate (PNP) or pyridoxamine 5'-phosphate (PMP) into pyridoxal 5'-phosphate (PLP). The polypeptide is Pyridoxine/pyridoxamine 5'-phosphate oxidase (Neisseria meningitidis serogroup A / serotype 4A (strain DSM 15465 / Z2491)).